The following is a 547-amino-acid chain: Chaperonin GroEL (547 aa).

Residues 30–33 (TLGP), Lys51, 87–91 (DGTTT), Gly415, 479–481 (NAA), and Asp495 contribute to the ATP site.

Belongs to the chaperonin (HSP60) family. In terms of assembly, forms a cylinder of 14 subunits composed of two heptameric rings stacked back-to-back. Interacts with the co-chaperonin GroES.

Its subcellular location is the cytoplasm. It catalyses the reaction ATP + H2O + a folded polypeptide = ADP + phosphate + an unfolded polypeptide.. Together with its co-chaperonin GroES, plays an essential role in assisting protein folding. The GroEL-GroES system forms a nano-cage that allows encapsulation of the non-native substrate proteins and provides a physical environment optimized to promote and accelerate protein folding. In Cupriavidus pinatubonensis (strain JMP 134 / LMG 1197) (Cupriavidus necator (strain JMP 134)), this protein is Chaperonin GroEL.